A 529-amino-acid polypeptide reads, in one-letter code: Ribonuclease Y (529 aa).

Residues 4 to 24 traverse the membrane as a helical segment; that stretch reads GLIYISLEVLVACLITALIMY. The region spanning 216 to 297 is the KH domain; the sequence is LTTRIALPCS…NRIEEVYHRV (82 aa). In terms of domain architecture, HD spans 342–435; that stretch reads ALQHSKEVAL…VCAADALSAG (94 aa).

The protein belongs to the RNase Y family.

The protein resides in the cell membrane. Its function is as follows. Endoribonuclease that initiates mRNA decay. This is Ribonuclease Y from Helicobacter pylori (strain HPAG1).